Here is a 559-residue protein sequence, read N- to C-terminus: Protein pp71 (559 aa).

Cys218 is subject to S-nitrosocysteine; by host. Thr223 carries the phosphothreonine modification. Disordered regions lie at residues 404 to 440 and 530 to 559; these read EFLP…TPLS and SSTL…RPRI. The span at 415-430 shows a compositional bias: acidic residues; that stretch reads TEEEEEEEEEDDEDDL. 2 stretches are compositionally biased toward low complexity: residues 431–440 and 543–559; these read SSTPTPTPLS and PIST…RPRI.

The protein belongs to the herpesviridae pp71 family. Interacts with the host protein DAXX; this interaction takes place at ND10 and induces the reversal of DAXX-mediated repression of viral transcription. Interacts with UL35. Interacts with host TMEM173/STING1; this interaction inhibits the cGAS/STING pathway. Interacts with host RB1; this interaction mediates RB1 proteasomal degradation. In terms of processing, S-nitrosylation limits ability to undermine the cGAS/STING antiviral pathway.

Its subcellular location is the virion tegument. It is found in the host nucleus. The protein localises to the host endoplasmic reticulum. Its function is as follows. Stimulates viral immediate-early (IE) transcription. Plays a role in the inhibition of the host innate repsonse by targeting STING1 and thus the cGAS-STING pathway. Also counteracts host DAXX-mediated repression of viral transcription. Displaces a DAXX-binding protein, ATRX, from nuclear domain 10 sites (ND10) shortly after infection. Increases the basal level of SUMOylated DAXX in infected cells. Stimulates quiescent cells to re-enter the cell cycle, proceed through G1 and enter the S phase. Interacts with hypophosphorylated forms of RB1 and induces their degradation by the proteasome without involving ubiquitin conjugation. The protein is Protein pp71 (UL82) of Homo sapiens (Human).